A 308-amino-acid chain; its full sequence is CAAX prenyl protease 2 (308 aa).

At Ala-2 the chain carries N-acetylalanine. 3 consecutive transmembrane segments (helical) span residues 25–45 (ALSSPGPGLCCWVSVFSCFSL), 75–95 (VLVVSSLSPLCVLLWRELTGI), and 112–132 (IFPAALLPLLLTMILFLGPLM). The Proton donor/acceptor role is filled by Glu-175. The helical transmembrane segment at 186 to 206 (MLAPCTGLGPAVFTCPLFFGV) threads the bilayer. The Proton donor/acceptor role is filled by His-208. 2 helical membrane-spanning segments follow: residues 233-253 (LIGPVLCHSFCNYMGFPAVCA) and 262-282 (PLLAGYALGVGLFLLLLQPLT).

The protein belongs to the peptidase U48 family. Post-translationally, ubiquitinated. Undergoes 'Lys-48'- and 'Lys-63'-linked ubiquitination. 'Lys-48' ubiquitination induces its degradation. Deubiquitinated by USP17L2/USP17 that cleaves 'Lys-63'-linked ubiquitin chains.

Its subcellular location is the endoplasmic reticulum membrane. It carries out the reaction Hydrolyzes the peptide bond -P2-(S-farnesyl or geranylgeranyl)C-P1'-P2'-P3'-COOH where P1' and P2' are amino acids with aliphatic sidechains and P3' is any C-terminal residue.. Deubiquitination by USP17L2/USP17 negatively regulates the proteolytic activity toward Ras GTPases. Protease involved in the processing of a variety of prenylated proteins containing the C-terminal CAAX motif, where C is a cysteine modified with an isoprenoid lipid, A is an aliphatic amino acid and X is any C-terminal amino acid. Proteolytically removes the C-terminal three residues of farnesylated and geranylated proteins, leaving the prenylated cysteine as the new C-terminus. Is able to process K-Ras, N-Ras, H-Ras, RAP1B and G-gamma-1. This Rattus norvegicus (Rat) protein is CAAX prenyl protease 2 (Rce1).